The chain runs to 222 residues: N-(5'-phosphoribosyl)anthranilate isomerase (222 aa).

Belongs to the TrpF family.

It catalyses the reaction N-(5-phospho-beta-D-ribosyl)anthranilate = 1-(2-carboxyphenylamino)-1-deoxy-D-ribulose 5-phosphate. Its pathway is amino-acid biosynthesis; L-tryptophan biosynthesis; L-tryptophan from chorismate: step 3/5. The polypeptide is N-(5'-phosphoribosyl)anthranilate isomerase (Rhizobium etli (strain CIAT 652)).